Reading from the N-terminus, the 601-residue chain is Polypeptide N-acetylgalactosaminyltransferase 11 (601 aa).

Residues 1–7 lie on the Cytoplasmic side of the membrane; the sequence is MGSAALR. Residues 8–28 form a helical; Signal-anchor for type II membrane protein membrane-spanning segment; it reads CFCYGCLFTSVTWTLLLFIYF. Asparagine 29 and asparagine 202 each carry an N-linked (GlcNAc...) asparagine glycan. Over 29–601 the chain is Lumenal; the sequence is NFSEESQGFR…SPSQQWHLEN (573 aa). Residues 143-254 are catalytic subdomain A; sequence LPMASIVICF…EMWLQPLLAP (112 aa). Residues 312-374 form a catalytic subdomain B region; sequence PFRSPTMAGG…PCSRVGHIFR (63 aa). The Ricin B-type lectin domain maps to 469 to 600; the sequence is RPKILQRGRL…GSPSQQWHLE (132 aa). Cysteine 486 and cysteine 505 are joined by a disulfide. Asparagine 508 carries N-linked (GlcNAc...) asparagine glycosylation. Cystine bridges form between cysteine 529–cysteine 546 and cysteine 571–cysteine 589.

This sequence belongs to the glycosyltransferase 2 family. GalNAc-T subfamily. Interacts with notch1. It depends on Mn(2+) as a cofactor. Requires Ca(2+) as cofactor.

The protein resides in the golgi apparatus membrane. The enzyme catalyses L-seryl-[protein] + UDP-N-acetyl-alpha-D-galactosamine = a 3-O-[N-acetyl-alpha-D-galactosaminyl]-L-seryl-[protein] + UDP + H(+). It catalyses the reaction L-threonyl-[protein] + UDP-N-acetyl-alpha-D-galactosamine = a 3-O-[N-acetyl-alpha-D-galactosaminyl]-L-threonyl-[protein] + UDP + H(+). It functions in the pathway protein modification; protein glycosylation. Polypeptide N-acetylgalactosaminyltransferase that catalyzes the initiation of protein O-linked glycosylation and is involved in left/right asymmetry by mediating O-glycosylation of NOTCH1. O-glycosylation of NOTCH1 promotes activation of NOTCH1, modulating the balance between motile and immotile (sensory) cilia at the left-right organiser (LRO). Polypeptide N-acetylgalactosaminyltransferases catalyze the transfer of an N-acetyl-D-galactosamine residue to a serine or threonine residue on the protein receptor. In Xenopus tropicalis (Western clawed frog), this protein is Polypeptide N-acetylgalactosaminyltransferase 11 (galnt11).